The chain runs to 176 residues: ATP synthase subunit b (176 aa).

Residues 26–45 (VINLAIIIGVLVYFGRGLLG) traverse the membrane as a helical segment.

It belongs to the ATPase B chain family. In terms of assembly, F-type ATPases have 2 components, F(1) - the catalytic core - and F(0) - the membrane proton channel. F(1) has five subunits: alpha(3), beta(3), gamma(1), delta(1), epsilon(1). F(0) has four main subunits: a(1), b(1), b'(1) and c(10-14). The alpha and beta chains form an alternating ring which encloses part of the gamma chain. F(1) is attached to F(0) by a central stalk formed by the gamma and epsilon chains, while a peripheral stalk is formed by the delta, b and b' chains.

Its subcellular location is the cellular thylakoid membrane. Its function is as follows. F(1)F(0) ATP synthase produces ATP from ADP in the presence of a proton or sodium gradient. F-type ATPases consist of two structural domains, F(1) containing the extramembraneous catalytic core and F(0) containing the membrane proton channel, linked together by a central stalk and a peripheral stalk. During catalysis, ATP synthesis in the catalytic domain of F(1) is coupled via a rotary mechanism of the central stalk subunits to proton translocation. Functionally, component of the F(0) channel, it forms part of the peripheral stalk, linking F(1) to F(0). The chain is ATP synthase subunit b from Synechococcus sp. (strain PCC 6716).